The primary structure comprises 474 residues: Glutamate--tRNA ligase (474 aa).

The 'HIGH' region signature appears at 9-19 (PSPTGYLHVGG). Positions 240 to 244 (KLSKR) match the 'KMSKS' region motif. Residue K243 participates in ATP binding.

It belongs to the class-I aminoacyl-tRNA synthetase family. Glutamate--tRNA ligase type 1 subfamily. Monomer.

Its subcellular location is the cytoplasm. The catalysed reaction is tRNA(Glu) + L-glutamate + ATP = L-glutamyl-tRNA(Glu) + AMP + diphosphate. Catalyzes the attachment of glutamate to tRNA(Glu) in a two-step reaction: glutamate is first activated by ATP to form Glu-AMP and then transferred to the acceptor end of tRNA(Glu). The protein is Glutamate--tRNA ligase of Aliivibrio fischeri (strain MJ11) (Vibrio fischeri).